Consider the following 262-residue polypeptide: 5'-nucleotidase SurE (262 aa).

Residues Asp8, Asp9, Ser40, and Asn92 each coordinate a divalent metal cation.

The protein belongs to the SurE nucleotidase family. It depends on a divalent metal cation as a cofactor.

It is found in the cytoplasm. It carries out the reaction a ribonucleoside 5'-phosphate + H2O = a ribonucleoside + phosphate. Nucleotidase that shows phosphatase activity on nucleoside 5'-monophosphates. The polypeptide is 5'-nucleotidase SurE (Xylella fastidiosa (strain 9a5c)).